The following is a 58-amino-acid chain: MAVPKRKKSKSRRNMHRSHLGLVAPNVVIDPTTGEYKLSHHVCLGGYYNGKQVAKSKV.

It belongs to the bacterial ribosomal protein bL32 family.

This Anaplasma phagocytophilum (strain HZ) protein is Large ribosomal subunit protein bL32.